We begin with the raw amino-acid sequence, 318 residues long: Ankyrin repeat and SOCS box protein 7 (318 aa).

ANK repeat units follow at residues 13–42, 46–75, 80–109, 116–145, 149–178, 180–208, and 213–242; these read QEEL…SPNG, NGWT…DPTV, GGFT…RSDI, DGWT…EVDP, KGTT…NIDI, NGFL…DTNL, and DGQT…DTNT. One can recognise an SOCS box domain in the interval 265 to 318; sequence LDFLQDVTRQPRTLQDLCRIKIRQCIGLQNLKLLDELPIAKVMKDYLKHKFDDI.

It belongs to the ankyrin SOCS box (ASB) family. In terms of assembly, interacts with CUL5. Interacts with RNF7. Interacts with PSRC1.

Its subcellular location is the nucleus. The protein resides in the cytoplasm. Its pathway is protein modification; protein ubiquitination. Functionally, probable substrate-recognition component of a SCF-like ECS (Elongin-Cullin-SOCS-box protein) E3 ubiquitin-protein ligase complex which mediates the ubiquitination and subsequent proteasomal degradation of target proteins. Plays a role in spindle dynamics and genome integrity by targeting the mitotic progression protein PSRC1 for proteasomal degradation in a cell cycle-dependent manner. Also participates in meiosis by mediating the proper attachment between kinetochores and microtubules. This Mus musculus (Mouse) protein is Ankyrin repeat and SOCS box protein 7 (Asb7).